Here is a 405-residue protein sequence, read N- to C-terminus: 8-amino-7-oxononanoate synthase 2 (405 aa).

Arginine 20 lines the substrate pocket. Glycine 116–tyrosine 117 contributes to the pyridoxal 5'-phosphate binding site. Histidine 141 provides a ligand contact to substrate. Residues serine 187, histidine 215, and threonine 243 each coordinate pyridoxal 5'-phosphate. Lysine 246 is modified (N6-(pyridoxal phosphate)lysine). A substrate-binding site is contributed by threonine 369.

Belongs to the class-II pyridoxal-phosphate-dependent aminotransferase family. BioF subfamily. Homodimer. Requires pyridoxal 5'-phosphate as cofactor.

The catalysed reaction is 6-carboxyhexanoyl-[ACP] + L-alanine + H(+) = (8S)-8-amino-7-oxononanoate + holo-[ACP] + CO2. The protein operates within cofactor biosynthesis; biotin biosynthesis. Its function is as follows. Catalyzes the decarboxylative condensation of pimeloyl-[acyl-carrier protein] and L-alanine to produce 8-amino-7-oxononanoate (AON), [acyl-carrier protein], and carbon dioxide. The chain is 8-amino-7-oxononanoate synthase 2 from Polaromonas sp. (strain JS666 / ATCC BAA-500).